A 301-amino-acid chain; its full sequence is Homoserine kinase (301 aa).

89–99 (KPGSGLGSSSA) contacts ATP.

It belongs to the GHMP kinase family. Homoserine kinase subfamily.

It is found in the cytoplasm. It catalyses the reaction L-homoserine + ATP = O-phospho-L-homoserine + ADP + H(+). Its pathway is amino-acid biosynthesis; L-threonine biosynthesis; L-threonine from L-aspartate: step 4/5. Catalyzes the ATP-dependent phosphorylation of L-homoserine to L-homoserine phosphate. The sequence is that of Homoserine kinase from Methanococcus maripaludis (strain C5 / ATCC BAA-1333).